The primary structure comprises 397 residues: MAGSRKVNDLLEENKGNVDTITGSLSTQKGEDKENVSPEKVSTSVETRKLDRALKSQSMKGNSGFPTEVTNFKSFSTGGRTALKQSSLQACMQKNSEVDKSSFGMKTWTSVDSEHSSSLKVWEFSDSEAAPASSWSTLPNRALLCKTLPLDVGRCTCLIVKEQSPEGLSHGSVYSLYTHEGRGRKDRKLAVAYHSRRNGKSIFRVAQNVKGLLCSSDESYVGSMTANLLGSKYYIWDKGVRVGSVGKMVKPLLSVVIFTPTITTWTGSYRRMRTLLPKQQPMQKNNNKQVQQASKLPLDWLENKEKIQKLCSRIPHYNKISKQHELDFRDRGRTGLRIQSSVKNFQLTLTETPRQTILQMGRVDKARYVIDFRYPFSGYQAFCICLASIDSKLCCTV.

Residues 1–16 are compositionally biased toward basic and acidic residues; that stretch reads MAGSRKVNDLLEENKG. A disordered region spans residues 1–46; sequence MAGSRKVNDLLEENKGNVDTITGSLSTQKGEDKENVSPEKVSTSVE. Residues 17 to 28 show a composition bias toward polar residues; it reads NVDTITGSLSTQ.

It belongs to the TUB family. Mostly expressed in roots, flowers and siliques.

The protein is Tubby-like protein 8 of Arabidopsis thaliana (Mouse-ear cress).